The following is a 238-amino-acid chain: Ribonuclease PH (238 aa).

Phosphate is bound by residues arginine 86 and 124-126 (GTR).

The protein belongs to the RNase PH family. Homohexameric ring arranged as a trimer of dimers.

The enzyme catalyses tRNA(n+1) + phosphate = tRNA(n) + a ribonucleoside 5'-diphosphate. Functionally, phosphorolytic 3'-5' exoribonuclease that plays an important role in tRNA 3'-end maturation. Removes nucleotide residues following the 3'-CCA terminus of tRNAs; can also add nucleotides to the ends of RNA molecules by using nucleoside diphosphates as substrates, but this may not be physiologically important. Probably plays a role in initiation of 16S rRNA degradation (leading to ribosome degradation) during starvation. This is Ribonuclease PH from Pasteurella multocida (strain Pm70).